We begin with the raw amino-acid sequence, 322 residues long: Phosphatidylglycerol--prolipoprotein diacylglyceryl transferase (322 aa).

4 helical membrane-spanning segments follow: residues 21–41, 50–70, 98–118, and 123–143; these read PLPI…AIWL, GGNP…GIIG, NGGL…WAYF, and IPLA…QAIG. Arg144 is a binding site for a 1,2-diacyl-sn-glycero-3-phospho-(1'-sn-glycerol). 2 helical membrane passes run 191-211 and 254-274; these read VHPT…LLIW and INTL…LRLG. A disordered region spans residues 283–322; that stretch reads VDPAYHAAQAERDDTETAGLDATTGTVPGDSPETTGKKRK.

The protein belongs to the Lgt family.

It is found in the cell membrane. The enzyme catalyses L-cysteinyl-[prolipoprotein] + a 1,2-diacyl-sn-glycero-3-phospho-(1'-sn-glycerol) = an S-1,2-diacyl-sn-glyceryl-L-cysteinyl-[prolipoprotein] + sn-glycerol 1-phosphate + H(+). It participates in protein modification; lipoprotein biosynthesis (diacylglyceryl transfer). Catalyzes the transfer of the diacylglyceryl group from phosphatidylglycerol to the sulfhydryl group of the N-terminal cysteine of a prolipoprotein, the first step in the formation of mature lipoproteins. In Corynebacterium efficiens (strain DSM 44549 / YS-314 / AJ 12310 / JCM 11189 / NBRC 100395), this protein is Phosphatidylglycerol--prolipoprotein diacylglyceryl transferase.